The sequence spans 218 residues: MKEKTTATTTTTTIPTRNADDDYELIKVLMLGDYKTGKGSVLRRYHYNEFELGVSSIGVDFVIRDYGIVNGKYYKIQIWDANSCERFRSITQAYYRGAHGFMLLYDCTNQESFNNLQFWINEIINKSPNSNNSTIVIIGNKCDLVNDIKIDPIKSKLFCDSKSITSFQNVSAKDSININEPFEILFKQIIEKGHSQTISPKLIKQRYENNNNKSCNIL.

Residue glycine 32 to glycine 39 coordinates GTP. The short motif at valine 54–phenylalanine 61 is the Effector region element. GTP is bound by residues aspartate 80 to cysteine 84 and asparagine 140 to aspartate 143. Cysteine methyl ester is present on cysteine 215. Residue cysteine 215 is the site of S-geranylgeranyl cysteine attachment. Residues asparagine 216–leucine 218 constitute a propeptide, removed in mature form.

This sequence belongs to the small GTPase superfamily. Rab family.

Its subcellular location is the cell membrane. This is Ras-related protein RabT2 (rabT2) from Dictyostelium discoideum (Social amoeba).